Here is a 413-residue protein sequence, read N- to C-terminus: DNA primase DnaG (413 aa).

In terms of domain architecture, Toprim spans 168–246 (PNLIIVEGRA…KIDYVARAPV (79 aa)). Positions 174, 219, and 221 each coordinate Mg(2+).

It belongs to the archaeal DnaG primase family. Forms a ternary complex with MCM helicase and DNA. Component of the archaeal exosome complex. It depends on Mg(2+) as a cofactor.

It carries out the reaction ssDNA + n NTP = ssDNA/pppN(pN)n-1 hybrid + (n-1) diphosphate.. Functionally, RNA polymerase that catalyzes the synthesis of short RNA molecules used as primers for DNA polymerase during DNA replication. Also part of the exosome, which is a complex involved in RNA degradation. Acts as a poly(A)-binding protein that enhances the interaction between heteromeric, adenine-rich transcripts and the exosome. The sequence is that of DNA primase DnaG from Metallosphaera sedula (strain ATCC 51363 / DSM 5348 / JCM 9185 / NBRC 15509 / TH2).